Here is a 198-residue protein sequence, read N- to C-terminus: Molybdenum cofactor guanylyltransferase (198 aa).

Residues 14–16 (LAG), lysine 27, aspartate 73, and aspartate 103 contribute to the GTP site. Aspartate 103 is a binding site for Mg(2+).

Belongs to the MobA family. In terms of assembly, monomer. It depends on Mg(2+) as a cofactor.

Its subcellular location is the cytoplasm. It catalyses the reaction Mo-molybdopterin + GTP + H(+) = Mo-molybdopterin guanine dinucleotide + diphosphate. In terms of biological role, transfers a GMP moiety from GTP to Mo-molybdopterin (Mo-MPT) cofactor (Moco or molybdenum cofactor) to form Mo-molybdopterin guanine dinucleotide (Mo-MGD) cofactor. The polypeptide is Molybdenum cofactor guanylyltransferase (Pseudomonas aeruginosa (strain ATCC 15692 / DSM 22644 / CIP 104116 / JCM 14847 / LMG 12228 / 1C / PRS 101 / PAO1)).